The chain runs to 286 residues: Eukaryotic translation initiation factor 3 subunit J (286 aa).

Disordered stretches follow at residues 1–35 (MSWDDEDFDIPSNSKQAAASWEEEGNDEPLLDSWD), 141–162 (AASGPTPARLTKDTPIDTHPLF), and 229–258 (KAERQARLKKAGGTATGGAGKKKAKPAVKT). Residues 21–35 (WEEEGNDEPLLDSWD) show a composition bias toward acidic residues. Positions 35-75 (DIDEEEVARKKKEEEAKKKAEKEALKKKQEESKAKKLSKNK) form a coiled coil.

The protein belongs to the eIF-3 subunit J family. As to quaternary structure, component of the eukaryotic translation initiation factor 3 (eIF-3) complex.

The protein resides in the cytoplasm. Functionally, component of the eukaryotic translation initiation factor 3 (eIF-3) complex, which is involved in protein synthesis of a specialized repertoire of mRNAs and, together with other initiation factors, stimulates binding of mRNA and methionyl-tRNAi to the 40S ribosome. The eIF-3 complex specifically targets and initiates translation of a subset of mRNAs involved in cell proliferation. In Debaryomyces hansenii (strain ATCC 36239 / CBS 767 / BCRC 21394 / JCM 1990 / NBRC 0083 / IGC 2968) (Yeast), this protein is Eukaryotic translation initiation factor 3 subunit J.